The chain runs to 150 residues: D-aminoacyl-tRNA deacylase (150 aa).

A Gly-cisPro motif, important for rejection of L-amino acids motif is present at residues glycine 138–proline 139.

The protein belongs to the DTD family. Homodimer.

It localises to the cytoplasm. The enzyme catalyses glycyl-tRNA(Ala) + H2O = tRNA(Ala) + glycine + H(+). It carries out the reaction a D-aminoacyl-tRNA + H2O = a tRNA + a D-alpha-amino acid + H(+). Functionally, an aminoacyl-tRNA editing enzyme that deacylates mischarged D-aminoacyl-tRNAs. Also deacylates mischarged glycyl-tRNA(Ala), protecting cells against glycine mischarging by AlaRS. Acts via tRNA-based rather than protein-based catalysis; rejects L-amino acids rather than detecting D-amino acids in the active site. By recycling D-aminoacyl-tRNA to D-amino acids and free tRNA molecules, this enzyme counteracts the toxicity associated with the formation of D-aminoacyl-tRNA entities in vivo and helps enforce protein L-homochirality. This is D-aminoacyl-tRNA deacylase from Natranaerobius thermophilus (strain ATCC BAA-1301 / DSM 18059 / JW/NM-WN-LF).